Reading from the N-terminus, the 113-residue chain is MNLLDKVDAASLRDDIPAFRPGDTLNVHVKVIEGSKSRIQVFKGVVIRRQGAGVRETFTIRKVSFGIGVERTFPVHTPNIDKIEVVTRGDVRRAKLYYLRDLRGKAAKIKEKR.

Belongs to the bacterial ribosomal protein bL19 family.

This protein is located at the 30S-50S ribosomal subunit interface and may play a role in the structure and function of the aminoacyl-tRNA binding site. The sequence is that of Large ribosomal subunit protein bL19 from Corynebacterium diphtheriae (strain ATCC 700971 / NCTC 13129 / Biotype gravis).